A 220-amino-acid polypeptide reads, in one-letter code: Deoxyribose-phosphate aldolase 2 (220 aa).

Catalysis depends on Asp89, which acts as the Proton donor/acceptor. Residue Lys151 is the Schiff-base intermediate with acetaldehyde of the active site. Residue Lys180 is the Proton donor/acceptor of the active site.

Belongs to the DeoC/FbaB aldolase family. DeoC type 1 subfamily.

It is found in the cytoplasm. It carries out the reaction 2-deoxy-D-ribose 5-phosphate = D-glyceraldehyde 3-phosphate + acetaldehyde. Its pathway is carbohydrate degradation; 2-deoxy-D-ribose 1-phosphate degradation; D-glyceraldehyde 3-phosphate and acetaldehyde from 2-deoxy-alpha-D-ribose 1-phosphate: step 2/2. Functionally, catalyzes a reversible aldol reaction between acetaldehyde and D-glyceraldehyde 3-phosphate to generate 2-deoxy-D-ribose 5-phosphate. This chain is Deoxyribose-phosphate aldolase 2, found in Staphylococcus aureus (strain MSSA476).